Here is a 154-residue protein sequence, read N- to C-terminus: Peptidoglycan amidase Tse1 (154 aa).

The cysteines at positions 7 and 148 are disulfide-linked. Cys-30 serves as the catalytic Nucleophile. The active-site Proton acceptor is the His-91.

In terms of assembly, forms a heterotetramer with Tsi1 consisting of two Tse1 dimers and two Tsi1 dimers. Formation of the complex inactivates Tse1 enzymatic activity.

It localises to the host membrane. The protein resides in the secreted. It carries out the reaction Hydrolysis of gamma-D-glutamyl bonds to the L-terminus (position 7) of meso-diaminopimelic acid (meso-A2pm) in 7-(L-Ala-gamma-D-Glu)-meso-A2pm and 7-(L-Ala-gamma-D-Glu)-7-(D-Ala)-meso-A2pm. It is required that the D-terminal amino and carboxy groups of meso-A2pm are unsubstituted.. Its function is as follows. Toxin secreted by the H1 type VI (H1-T6SS) secretion system into the periplasm of recipient cells. Degrades peptidoglycan via amidase activity thereby helping itself to compete with other bacteria. To protect itself, the bacterium synthesizes immunity protein Tsi1 that specifically interacts with and inactivates cognate toxin. This Pseudomonas aeruginosa (strain ATCC 15692 / DSM 22644 / CIP 104116 / JCM 14847 / LMG 12228 / 1C / PRS 101 / PAO1) protein is Peptidoglycan amidase Tse1.